A 331-amino-acid chain; its full sequence is Sucrose operon repressor (331 aa).

The 56-residue stretch at 1–56 (MASLKDVARLAGVSMMTVSRVMHNAESVRPATRDRVLQAIQTLNYVPDLSARKMRA) folds into the HTH lacI-type domain. The H-T-H motif DNA-binding region spans 4–23 (LKDVARLAGVSMMTVSRVMH).

Functionally, repressor for the csc operon. Binds D-fructose as an inducer. This chain is Sucrose operon repressor (cscR), found in Escherichia coli.